We begin with the raw amino-acid sequence, 171 residues long: MPMKGRFPIRRTLQYLGRGDVVFKESVKIMTVNYNTYGELGEGARKFVFFNIPQIQYKNPWVQIMMFKNMTPSPFLRFYLDSGEQVLVDVETKSNKEIMEHIKKILGKKEETLREEELEKQQRFHPGNFGPRKYCLRECMCEVEGQVPCPGLVPLPKEMTGKYKAALKAST.

The protein belongs to the mitochondrion-specific ribosomal protein mS25 family. As to quaternary structure, component of the mitochondrial ribosome small subunit (28S) which comprises a 12S rRNA and about 30 distinct proteins.

Its subcellular location is the mitochondrion. The chain is Small ribosomal subunit protein mS25 (Mrps25) from Mus musculus (Mouse).